The chain runs to 284 residues: Tropomyosin alpha-1 chain (284 aa).

Positions 1 to 37 are disordered; it reads MDAIKKKMQMLKLDKENALDRAEQAETDKKAAEERSK. Residues 1-284 are a coiled coil; the sequence is MDAIKKKMQM…DHALNDMTSI (284 aa). Basic and acidic residues predominate over residues 12–37; it reads KLDKENALDRAEQAETDKKAAEERSK.

Belongs to the tropomyosin family. As to quaternary structure, homodimer. Heterodimer of an alpha (TPM1, TPM3 or TPM4) and a beta (TPM2) chain.

Its subcellular location is the cytoplasm. It localises to the cytoskeleton. Binds to actin filaments in muscle and non-muscle cells. Plays a central role, in association with the troponin complex, in the calcium dependent regulation of vertebrate striated muscle contraction. Smooth muscle contraction is regulated by interaction with caldesmon. In non-muscle cells is implicated in stabilizing cytoskeleton actin filaments. In Danio rerio (Zebrafish), this protein is Tropomyosin alpha-1 chain (tpma).